The following is a 305-amino-acid chain: Nucleotide-binding protein Rxyl_2009 (305 aa).

Gly24–Ser31 contributes to the ATP binding site. Position 75–78 (Asp75–Gly78) interacts with GTP.

It belongs to the RapZ-like family.

In terms of biological role, displays ATPase and GTPase activities. The protein is Nucleotide-binding protein Rxyl_2009 of Rubrobacter xylanophilus (strain DSM 9941 / JCM 11954 / NBRC 16129 / PRD-1).